The chain runs to 275 residues: Beta-lactamase OXA-2 (275 aa).

A signal peptide spans 1 to 21 (MAIRIFAILFSIFSLATFAHA). Residue Ser72 is the Acyl-ester intermediate of the active site. Position 75 is an N6-carboxylysine (Lys75). A substrate-binding site is contributed by 210-212 (KTG).

It belongs to the class-D beta-lactamase family.

The enzyme catalyses a beta-lactam + H2O = a substituted beta-amino acid. Functionally, this is an oxacillin-hydrolyzing beta-lactamase. In Escherichia coli, this protein is Beta-lactamase OXA-2 (bla).